The following is a 612-amino-acid chain: Threonine--tRNA ligase (612 aa).

Positions 218–509 (DHRKLGVELG…LSEHFGGNFP (292 aa)) are catalytic. 3 residues coordinate Zn(2+): Cys-310, His-361, and His-486.

It belongs to the class-II aminoacyl-tRNA synthetase family. In terms of assembly, homodimer. Zn(2+) is required as a cofactor.

It is found in the cytoplasm. The catalysed reaction is tRNA(Thr) + L-threonine + ATP = L-threonyl-tRNA(Thr) + AMP + diphosphate + H(+). Catalyzes the attachment of threonine to tRNA(Thr) in a two-step reaction: L-threonine is first activated by ATP to form Thr-AMP and then transferred to the acceptor end of tRNA(Thr). Also edits incorrectly charged L-seryl-tRNA(Thr). The protein is Threonine--tRNA ligase of Helicobacter pylori (strain ATCC 700392 / 26695) (Campylobacter pylori).